A 725-amino-acid chain; its full sequence is Dolichyl-phosphate-mannose--protein mannosyltransferase 5 (725 aa).

Helical transmembrane passes span 34-54 (QFAV…LYIP), 117-137 (YLWL…LTFF), 145-165 (SVIS…VTVS), 192-212 (IPFT…LGLN), 219-239 (GLFT…EILG), and 256-276 (VVAF…IHFE). MIR domains are found at residues 303 to 356 (PLQV…IETK), 368 to 427 (QREV…IRML), and 439 to 495 (LIKL…VESS). Asparagine 409 is a glycosylation site (N-linked (GlcNAc...) asparagine). 4 helical membrane passes run 570-590 (IYYL…LIAI), 619-639 (FYNN…PYCL), 644-664 (LYLH…SQYL), and 673-693 (IIGG…FYEF).

The protein belongs to the glycosyltransferase 39 family.

The protein localises to the endoplasmic reticulum membrane. It carries out the reaction a di-trans,poly-cis-dolichyl beta-D-mannosyl phosphate + L-seryl-[protein] = 3-O-(alpha-D-mannosyl)-L-seryl-[protein] + a di-trans,poly-cis-dolichyl phosphate + H(+). The enzyme catalyses a di-trans,poly-cis-dolichyl beta-D-mannosyl phosphate + L-threonyl-[protein] = 3-O-(alpha-D-mannosyl)-L-threonyl-[protein] + a di-trans,poly-cis-dolichyl phosphate + H(+). The protein operates within protein modification; protein glycosylation. Functionally, protein mannosyltransferase (PMT) involved in hyphal morphogenesis and drug sensitivity. Transfers mannose from Dol-P-mannose to Ser or Thr residues on proteins. PMT1, PMT2 and PMT4 account for most of the protein-O-glycosylation activity, while PMT5 and PMT6 may specifically modulate a much narrower spectrum of target proteins. Required for biofilm formation. In Candida albicans (strain SC5314 / ATCC MYA-2876) (Yeast), this protein is Dolichyl-phosphate-mannose--protein mannosyltransferase 5.